The primary structure comprises 305 residues: MVQESIISSFRGKLENDPSKSTSLATVETLLEVLDRSRATTVAEFQNELNQVVAALEKTDYSSTSIRSAADLFTRFTSLAPAALLDQEDFSQVLDLYRQRARSFIKNVRGSRAKISKCARLFFTHHMNILTHSYSKVVLETILDAHKSGYHLHVWVTESQPDASGKLVFEELKKNGVPTTLVLDSCVGYVMERIQAVLVGAEGVMETGGIINKIGTVNVCIIAKSRHVPVYVCAETIKFVREFPLNQADIPQEFKYRTSVIERNNLELEHPDVDYTAPEFLTLIITDVGAMKPEAVGEELIKMYI.

It belongs to the eIF-2B alpha/beta/delta subunits family. As to quaternary structure, component of the translation initiation factor 2B (eIF2B) complex which is a heterodecamer of two sets of five different subunits: alpha, beta, gamma, delta and epsilon. Subunits alpha, beta and delta comprise a regulatory subcomplex and subunits epsilon and gamma comprise a catalytic subcomplex. Within the complex, the hexameric regulatory complex resides at the center, with the two heterodimeric catalytic subcomplexes bound on opposite sides.

The protein localises to the cytoplasm. The protein resides in the cytosol. Functionally, acts as a component of the translation initiation factor 2B (eIF2B) complex, which catalyzes the exchange of GDP for GTP on eukaryotic initiation factor 2 (eIF2) gamma subunit. Its guanine nucleotide exchange factor activity is repressed when bound to eIF2 complex phosphorylated on the alpha subunit, thereby limiting the amount of methionyl-initiator methionine tRNA available to the ribosome and consequently global translation is repressed. This is Translation initiation factor eIF2B subunit alpha from Caenorhabditis elegans.